The sequence spans 1335 residues: MLSPTFVLWEVGYPLYIYGSIFIVIVIIWQVKRSHHELSSEPKRSCCRCHQKVRQRARDAASTARRRSREEAEKPQKLLSIIKSQGWLPLERSVRRILCADPCCQICNSVALEIQQLLVGENNQISLTLSGPLQGSSCLEMLSTSSMSLDQSLEFHSWHTRELSLSSVTPTLSQLTDQKSLTQSAAQSTYADGIQDYWADHLQLGQEFQVPDVLRGPNTIASSRIEKPRAPLNQEEMTQSNPSLVQGNQGQHHLNSQVSLLSLNPETLNRMHPMALHMVLPAHLPFLSPEVLRLLEVHVKKWMHFQRWGLPRRVEESLRQLMPNPPLYYQPGNDQPVSFNLKNTPQVSLHRFETISLQTWCSCVAGQPIQTFWVSEWSTMNPEQRHHCQQTPNPMALALPSPALKALSGPHPQSGGQDNDSGSDLQQKYSQLFCGLPSLHSESLVATFMGSQGLPKIENVPKPPLKDPFLFNELSFPQLLPKTSPQSAPPSSPLSPNWMSPSDHQRAQINVPFLTLAEYEALEWHLLQRQLQLQWGWPAALQRSQHTQCLMQHEPCGKAQSPETTTASQTGKSISVLTRELLFFPEHARKLLEFHIQKQLIRHRWGLPQKIQQSIQLLLTSTDQQTVSSSSTALANVSIPQPVALEANGACDVLSPIAAPVSIPRPHLLTQVKAILQSHIDSKCGQIHQGKIPACVHRSWDCRISGVLAVAPFPCIPESQFLELQTASDPDLHHKVMPWMPTALDQQQQALPGTVTEHPKLLRVLSVEAIEKLETTLRHKHLAFLSGLPALYYVALPRALAPAVTSQSVITEMEPSPVEIPAEPLIQMVSFEEQCISLGPCPQGNNESCTDVAKEFQPAVPVKGTMETLPLESQTHPTSPHSLQTHILTKLNFHLRKKVLEIQWGIPIRARKSREQTVAAPENISTQKSLESLNHQGETLLQELPIPPDTLPAPNPEGVHLKEQLANDLKAVQQNQKQSNSKAVPQGSAHSVSKISQPSGDMTEAHMPCVQVEANVNKPSLEEPCGPEPQSPSKSKDPAHVPMLAGNREDPEETKAARDHREGDAGFGRSSTREERRPAEDQRPAGMLPNKTPRGSWRWSRSFHLADPCQHSPQHHPQLKLPQLPPRVPGEKESEKDLQDSQTKLTVILEPATIPENAQTVLPQASQGQPFLSQPTQAKPLQGQTLQGQVLHGLVMPVHAQKKPSLTESSFRNKIKCFLQHINPKTKGKGHEDSMFSAAAKVAKTRKENVAKSLAPAKSPVGRSKTEKPTGCSKAQSRPAQKLVGPAFLDGPQSLDDKLRLHSRQPGSASALGYPRHCPRHCPREACANKPGHPT.

Residues 8–28 traverse the membrane as a helical segment; sequence LWEVGYPLYIYGSIFIVIVII. Disordered stretches follow at residues 403–424, 480–502, 972–1002, 1019–1141, and 1248–1335; these read ALKALSGPHPQSGGQDNDSGSD, LPKTSPQSAPPSSPLSPNWMSPS, VQQNQKQSNSKAVPQGSAHSVSKISQPSGDM, PSLE…LQDS, and ENVA…GHPT. Positions 414-424 are enriched in polar residues; the sequence is SGGQDNDSGSD. Residues 972-1000 show a composition bias toward polar residues; that stretch reads VQQNQKQSNSKAVPQGSAHSVSKISQPSG. Composition is skewed to basic and acidic residues over residues 1047 to 1064, 1071 to 1083, and 1129 to 1139; these read NREDPEETKAARDHREGD, STREERRPAEDQR, and PGEKESEKDLQ.

This sequence belongs to the SPATA31 family.

It localises to the membrane. This Homo sapiens (Human) protein is Protein SPATA31F1.